The chain runs to 175 residues: ADP-ribosylation factor 6 (175 aa).

A lipid anchor (N-myristoyl glycine) is attached at Gly-2. Lys-3 is lipidated: N6-myristoyl lysine. GTP-binding positions include 23-28 (AAGKTT), 41-44 (TIPT), 63-67 (DVGGQ), 122-125 (NKQD), and 155-156 (CA).

Belongs to the small GTPase superfamily. Arf family. Interacts (when activated) with GGA1, GGA2 and GGA3; the interaction is required for proper subcellular location of GGA1, GGA2 and GGA3. Interacts with PIP5K1C. Interacts with USP6 (via Rab-GAP TBC domain). Interacts with RAB11FIP3 and RAB11FIP4. Interacts with HERC1. Interacts with ARHGAP21. Interacts with ASAP3; the interaction is stabilized by calcium ions. Interacts with NCS1/FREQ at the plasma membrane. Interacts with TBC1D24. Interacts with ECPAS. Interacts with MICALL1. Interacts with SPAG9 homodimers, forming heterotetramers. Interacts with CYTH3. Interacts with ASAP2. Interacts with UACA. Interacts with KIF23, forming heterodimers and heterotetramers. Interacts with C9orf72. Interacts (GTP-bound form) with TJAP1/PILT. Interacts with PRKAA2. Interacts with CD36 (when palmitoylated); this interaction mediates CD36 transport from the Golgi to the plasma membrane. Interacts with APBB1. In terms of assembly, (Microbial infection) Interacts with the V.cholerae enterotoxin subunit A1; this causes a conformation change so that the toxin can bind NAD and catalyze the ADP-ribosylation of Gs alpha. As to quaternary structure, (Microbial infection) Interacts with EspG from enteropathogenic E.coli. (Microbial infection) Identified in a complex with RAB1A and EspG from enteropathogenic E.coli. In terms of assembly, (Microbial infection) Interacts with human enterovirus 71 protein VP1. Post-translationally, GTP-bound form is myristoylated on Lys-3 by NMT1 and NMT2, allowing ARF6 to remain on membranes during the GTPase cycle, thereby promoting its activity. GDP-bound inactive form is demyristoylated on Lys-3 by SIRT2 at early endosomes or endocytic recycling compartment to allow its efficient activation by a guanine exchange factor (GEF) after GDP release. As to expression, ubiquitous, with higher levels in heart, substantia nigra, and kidney.

It is found in the cytoplasm. It localises to the cytosol. Its subcellular location is the cell membrane. The protein localises to the endosome membrane. The protein resides in the recycling endosome membrane. It is found in the cell projection. It localises to the filopodium membrane. Its subcellular location is the ruffle. The protein localises to the cleavage furrow. The protein resides in the midbody. It is found in the midbody ring. It localises to the early endosome membrane. Its subcellular location is the golgi apparatus. The protein localises to the trans-Golgi network membrane. It carries out the reaction GTP + H2O = GDP + phosphate + H(+). With respect to regulation, activation is generally mediated by a guanine exchange factor (GEF), while inactivation through hydrolysis of bound GTP is catalyzed by a GTPase activating protein (GAP). Activated by ASAP3. Inactivated by ACAP1 and ACAP2. Activated by NGF via NTRK1. Activated by PRKAA2 through its C-terminal regulatory domain. Functionally, GTP-binding protein involved in protein trafficking that regulates endocytic recycling and cytoskeleton remodeling. GTP-bound form plays an important role in the transport of multiple palmitoylated proteins form the Golgi to the plasma membrane. Required for normal completion of mitotic cytokinesis. Plays a role in the reorganization of the actin cytoskeleton and the formation of stress fibers. Involved in the regulation of dendritic spine development, contributing to the regulation of dendritic branching and filopodia extension. Potentiates the neurite outgrowth in primary neurons by interacting with the molecular adapter APBB1. Plays an important role in membrane trafficking, during junctional remodeling and epithelial polarization. Regulates surface levels of adherens junction proteins such as CDH1. Required for NTRK1 sorting to the recycling pathway from early endosomes. In terms of biological role, (Microbial infection) Functions as an allosteric activator of the cholera toxin catalytic subunit, an ADP-ribosyltransferase. Its function is as follows. (Microbial infection) Plays a key role in the endocytosis of enterovirus 71 and thus viral entry into brain microvascular endothelial cells. The protein is ADP-ribosylation factor 6 of Homo sapiens (Human).